The sequence spans 146 residues: Angiogenin (146 aa).

Positions 1 to 24 (MVMGLGLFLLVFMLGLGLTPPTLA) are cleaved as a signal peptide. The residue at position 25 (Gln-25) is a Pyrrolidone carboxylic acid. The active-site Proton acceptor is the His-37. Arg-45 is a tRNA binding site. Intrachain disulfides connect Cys-50-Cys-105, Cys-63-Cys-116, and Cys-81-Cys-131. A Nucleolar localization signal motif is present at residues 55-59 (RRRHL). Residues Cys-105 and Ile-127 each contribute to the tRNA site. His-138 serves as the catalytic Proton donor.

Belongs to the pancreatic ribonuclease family. As to quaternary structure, homodimer. Interacts with RNH1; inhibiting ANG ribonuclease activity. Interacts with PCNA.

It localises to the secreted. The protein localises to the nucleus. Its subcellular location is the nucleolus. The protein resides in the cytoplasm. It is found in the stress granule. With respect to regulation, has weak tRNA ribonuclease activity by itself due to partial autoinhibition by its C-terminus, which folds into a short alpha-helix that partially occludes the substrate-binding site. In absence of stress, the ribonuclease activity is inhibited by RNH1 in the cytoplasm. In response to stress, dissociates from RNH1 in the cytoplasm and associates with cytoplasmic ribosomes with vacant A-sites: ribosomes directly activate the tRNA ribonuclease activity of ANG by refolding the C-terminal alpha-helix. In response to stress, the angiogenic activity of ANG is inhibited by RNH1 in the nucleus. Functionally, secreted ribonuclease that can either promote or restrict cell proliferation of target cells, depending on the context. Endocytosed in target cells via its receptor PLXNB2 and translocates to the cytoplasm or nucleus. Under stress conditions, localizes to the cytoplasm and promotes the assembly of stress granules (SGs): specifically cleaves a subset of tRNAs within anticodon loops to produce tRNA-derived stress-induced fragments (tiRNAs), resulting in translation repression and inhibition of cell proliferation. tiRNas also prevent formation of apoptosome, thereby promoting cell survival. Preferentially cleaves RNAs between a pyrimidine and an adenosine residue, suggesting that it cleaves the anticodon loop of tRNA(Ala) (32-UUAGCAU-38) after positions 33 and 36. Cleaves a subset of tRNAs, including tRNA(Ala), tRNA(Glu), tRNA(Gly), tRNA(Lys), tRNA(Val), tRNA(His), tRNA(Asp) and tRNA(Sec). Under growth conditions and in differentiated cells, translocates to the nucleus and stimulates ribosomal RNA (rRNA) transcription, including that containing the initiation site sequences of 45S rRNA, thereby promoting cell growth and proliferation. Angiogenin induces vascularization of normal and malignant tissues via its ability to promote rRNA transcription. Involved in hematopoietic stem and progenitor cell (HSPC) growth and survival by promoting rRNA transcription in growth conditions and inhibiting translation in response to stress, respectively. Mediates the crosstalk between myeloid and intestinal epithelial cells to protect the intestinal epithelial barrier integrity: secreted by myeloid cells and promotes intestinal epithelial cells proliferation and survival. Also mediates osteoclast-endothelial cell crosstalk in growing bone: produced by osteoclasts and protects the neighboring vascular cells against senescence by promoting rRNA transcription. In Chlorocebus aethiops (Green monkey), this protein is Angiogenin (ANG).